Reading from the N-terminus, the 459-residue chain is Anthocyanidin 3-O-glucoside 2''-O-glucosyltransferase (459 aa).

Catalysis depends on His-20, which acts as the Proton acceptor. His-20 provides a ligand contact to an anthocyanidin. The Charge relay role is filled by Asp-117. Thr-138, Val-335, Gln-337, His-352, Trp-355, Ser-357, and Glu-360 together coordinate UDP-alpha-D-glucose. Gly-375 contributes to the an anthocyanidin binding site. UDP-alpha-D-glucose is bound by residues Asp-376 and Gln-377.

It belongs to the UDP-glycosyltransferase family. As to expression, mainly expressed in the petals and tubes of flower buds at around 24 hours before flower opening.

The enzyme catalyses an anthocyanidin 3-O-beta-D-glucoside + UDP-alpha-D-glucose = an anthocyanidin 3-O-sophoroside + UDP + 2 H(+). It participates in pigment biosynthesis; anthocyanin biosynthesis. Glycosyltransferase that mediates the glucosylation of anthocyanidin 3-O-glucosides to yield anthocyanidin 3-O-sophorosides. 3-O-sophoroside derivatives are required for the bright blue or red color of flowers. The chain is Anthocyanidin 3-O-glucoside 2''-O-glucosyltransferase (3GGT) from Ipomoea nil (Japanese morning glory).